Here is a 93-residue protein sequence, read N- to C-terminus: Phosphoribosyl-ATP pyrophosphatase (93 aa).

Belongs to the PRA-PH family.

The protein localises to the cytoplasm. It catalyses the reaction 1-(5-phospho-beta-D-ribosyl)-ATP + H2O = 1-(5-phospho-beta-D-ribosyl)-5'-AMP + diphosphate + H(+). It functions in the pathway amino-acid biosynthesis; L-histidine biosynthesis; L-histidine from 5-phospho-alpha-D-ribose 1-diphosphate: step 2/9. The polypeptide is Phosphoribosyl-ATP pyrophosphatase (hisE) (Mycobacterium bovis (strain ATCC BAA-935 / AF2122/97)).